The following is a 173-amino-acid chain: T-cell surface glycoprotein CD3 gamma chain (173 aa).

An N-terminal signal peptide occupies residues 1 to 22 (MEQGKHLAGLILAVFLLQGTMA). The Extracellular portion of the chain corresponds to 23-111 (HVKEVKVDDN…NCIELNPSTV (89 aa)). Residues 24 to 94 (VKEVKVDDNR…GSNNQSKSLQ (71 aa)) enclose the Ig-like domain. Cys42 and Cys83 are oxidised to a cystine. Asn45 and Asn88 each carry an N-linked (GlcNAc...) asparagine glycan. A helical membrane pass occupies residues 112–132 (AGFIFTEIVSIFLLAVGVYFI). Residues 133-173 (AGQEGVRQSRASDKQTLLNNDQLYQPLKEREDDQYSHLRKN) are Cytoplasmic-facing. Phosphoserine is present on Ser141. Position 144 is a phosphoserine; by PKC (Ser144). Positions 145–173 (DKQTLLNNDQLYQPLKEREDDQYSHLRKN) constitute an ITAM domain. Residues 149–150 (LL) carry the Di-leucine motif motif.

As to quaternary structure, the TCR-CD3 complex is composed of a CD3D/CD3E and a CD3G/CD3E heterodimers that preferentially associate with TCRalpha and TCRbeta, respectively, to form TCRalpha/CD3E/CD3G and TCRbeta/CD3G/CD3E trimers. In turn, the hexamer interacts with CD3Z homodimer to form the TCR-CD3 complex. Alternatively, TCRalpha and TCRbeta can be replaced by TCRgamma and TCRdelta. Post-translationally, phosphorylated on Tyr residues after T-cell receptor triggering by LCK in association with CD4/CD8. Phosphorylated also by PKC; leading to the TCR complex down-regulation. In terms of processing, phosphorylated on Tyr residues after T-cell receptor triggering by LCK in association with CD4/CD8.

Its subcellular location is the cell membrane. In terms of biological role, part of the TCR-CD3 complex present on T-lymphocyte cell surface that plays an essential role in adaptive immune response. When antigen presenting cells (APCs) activate T-cell receptor (TCR), TCR-mediated signals are transmitted across the cell membrane by the CD3 chains CD3D, CD3E, CD3G and CD3Z. All CD3 chains contain immunoreceptor tyrosine-based activation motifs (ITAMs) in their cytoplasmic domain. Upon TCR engagement, these motifs become phosphorylated by Src family protein tyrosine kinases LCK and FYN, resulting in the activation of downstream signaling pathways. In addition to this role of signal transduction in T-cell activation, CD3G plays an essential role in the dynamic regulation of TCR expression at the cell surface. Indeed, constitutive TCR cycling is dependent on the di-leucine-based (diL) receptor-sorting motif present in CD3G. In Bos taurus (Bovine), this protein is T-cell surface glycoprotein CD3 gamma chain (CD3G).